The primary structure comprises 1566 residues: Arginine-glutamic acid dipeptide repeats protein (1566 aa).

The segment covering 1 to 36 (MTADKDKDKDKEKDRDRDRDREREKRDKARESENSR) has biased composition (basic and acidic residues). The interval 1–90 (MTADKDKDKD…KKKSRYERTD (90 aa)) is disordered. Residues Ser53 and Ser56 each carry the phosphoserine modification. Residues 74 to 85 (KNKKKPPKKKSR) are compositionally biased toward basic residues. The 181-residue stretch at 103–283 (VVYRPGDCVY…PETRRLNSTQ (181 aa)) folds into the BAH domain. At Thr120 the chain carries Phosphothreonine. Phosphoserine is present on residues Ser142 and Ser304. One can recognise an ELM2 domain in the interval 284 to 387 (GEIRVGPSHQ…KALQRLVKKP (104 aa)). In terms of domain architecture, SANT spans 391 to 443 (LIEKCWTEDEVKRFVKGLRQYGKNFFRIRKELLPNKETGELITFYYYWKKTPE). Positions 464-495 (TRTASTPVNTPSRPPSSEFLDLSSASEDDFDS) are disordered. Polar residues predominate over residues 465 to 474 (RTASTPVNTP). Over residues 479–488 (SSEFLDLSSA) the composition is skewed to low complexity. The GATA-type zinc finger occupies 507 to 532 (CRHCFTTTSKDWHHGGRENILLCTDC). The disordered stretch occupies residues 542–1133 (LPPIEKPVDP…PSHASQSARF (592 aa)). Lys560 participates in a covalent cross-link: Glycyl lysine isopeptide (Lys-Gly) (interchain with G-Cter in SUMO2). Phosphoserine is present on residues Ser594, Ser600, and Ser613. Residues 609 to 623 (SGRNSPSAASTSSND) are compositionally biased toward low complexity. Residues 624–640 (SKAETVKKSAKKVKEEA) are compositionally biased toward basic and acidic residues. Lys637 participates in a covalent cross-link: Glycyl lysine isopeptide (Lys-Gly) (interchain with G-Cter in SUMO2). Residues Ser642, Ser656, Ser675, and Ser679 each carry the phosphoserine modification. The segment covering 652–673 (EKVASDTEEADRTSSKKTKTQE) has biased composition (basic and acidic residues). Basic and acidic residues predominate over residues 688–708 (SDSRSVNDEGSSDPKDIDQDN). The segment covering 709–720 (RSTSPSIPSPQD) has biased composition (polar residues). The segment covering 726–751 (DSSAQQQMLQAQPPALQAPTGVTPAP) has biased composition (low complexity). Residues 752 to 767 (SSAPPGTPQLPTPGPT) are compositionally biased toward pro residues. The segment covering 778-796 (SPTASQAPNQPQAPTAPVP) has biased composition (low complexity). Pro residues predominate over residues 809–827 (QRPPSPHPPPHPSPHPPLQ). Over residues 829–840 (LTGSAGQPSAPS) the composition is skewed to polar residues. Composition is skewed to low complexity over residues 843–865 (QPPLHGQGPPGPHSLQAGPLLQH) and 897–913 (SLQLPASQSALQSQQPP). Over residues 914 to 940 (REQPLPPAPLAMPHIKPPPTTPIPQLP) the composition is skewed to pro residues. Residues 970–980 (KPLSSLSTHHP) show a composition bias toward low complexity. A compositionally biased stretch (pro residues) spans 1030 to 1052 (PQPPFAQHPFVPGGPPPITPPTC). Residues 1053-1085 (PSTSTPPAGPGTSAQPPCSGAAASGGSIAGGSS) are compositionally biased toward low complexity. Phosphoserine is present on residues Ser1106, Ser1113, and Ser1115. A compositionally biased stretch (pro residues) spans 1106–1117 (SPPPPPRSPSPE). Thr1119 is subject to Phosphothreonine. Positions 1156–1211 (GSKLAKKREEAIEKAKREAEQKAREEREREKEKEKEREREREREREAERAAKASSS) form a coiled coil. At Lys1158 the chain carries N6-acetyllysine. Positions 1162 to 1206 (KREEAIEKAKREAEQKAREEREREKEKEKEREREREREREAERAA) are enriched in basic and acidic residues. The disordered stretch occupies residues 1162 to 1246 (KREEAIEKAK…TTIAAVPPYI (85 aa)). Tyr1259 carries the post-translational modification Phosphotyrosine. Position 1266 is a phosphoserine (Ser1266).

In terms of assembly, interacts with HDAC1. Interacts with ATN1. Interaction with ATN1 is improved when the poly-Gln region of ATN1 is extended. Interacts with FAT1. In terms of tissue distribution, widely expressed. Expressed in tumor cell lines.

The protein localises to the nucleus. In terms of biological role, plays a role as a transcriptional repressor during development. May play a role in the control of cell survival. Overexpression of RERE recruits BAX to the nucleus particularly to POD and triggers caspase-3 activation, leading to cell death. The protein is Arginine-glutamic acid dipeptide repeats protein (RERE) of Homo sapiens (Human).